The primary structure comprises 535 residues: EGF domain-specific O-linked N-acetylglucosamine transferase (535 aa).

An N-terminal signal peptide occupies residues 1-16 (MFILLMFVLLLQEILA). Residues asparagine 22 and asparagine 271 are each glycosylated (N-linked (GlcNAc...) asparagine). A Required for optimal activity motif is present at residues 303–305 (DYD). N-linked (GlcNAc...) asparagine glycosylation is found at asparagine 362 and asparagine 501.

It belongs to the glycosyltransferase 61 family.

It is found in the endoplasmic reticulum lumen. It carries out the reaction L-seryl-[protein] + UDP-N-acetyl-alpha-D-glucosamine = 3-O-(N-acetyl-beta-D-glucosaminyl)-L-seryl-[protein] + UDP + H(+). The enzyme catalyses L-threonyl-[protein] + UDP-N-acetyl-alpha-D-glucosamine = 3-O-(N-acetyl-beta-D-glucosaminyl)-L-threonyl-[protein] + UDP + H(+). In terms of biological role, catalyzes the transfer of a single N-acetylglucosamine from UDP-GlcNAc to a serine or threonine residue in extracellular proteins resulting in their modification with a beta-linked N-acetylglucosamine (O-GlcNAc). Specifically glycosylates the Thr residue located between the fifth and sixth conserved cysteines of folded EGF-like domains. The chain is EGF domain-specific O-linked N-acetylglucosamine transferase (EOGT) from Gallus gallus (Chicken).